A 516-amino-acid chain; its full sequence is Anaerobic nitric oxide reductase transcription regulator NorR (516 aa).

The residue at position 57 (D57) is a 4-aspartylphosphate. One can recognise a Sigma-54 factor interaction domain in the interval 187–416 (IIGLSAPMLQ…LEHAIHRAVV (230 aa)). ATP-binding positions include 215-222 (GETGTGKE) and 278-287 (ADNGTLFLDE). The segment at residues 482–501 (WAATARALELDVANLHRLAK) is a DNA-binding region (H-T-H motif).

It participates in nitrogen metabolism; nitric oxide reduction. Its function is as follows. Required for the expression of anaerobic nitric oxide (NO) reductase, acts as a transcriptional activator for at least the norVW operon. Activation also requires sigma-54. This chain is Anaerobic nitric oxide reductase transcription regulator NorR, found in Klebsiella pneumoniae (strain 342).